Here is a 131-residue protein sequence, read N- to C-terminus: Small ribosomal subunit protein bS6 (131 aa).

The protein belongs to the bacterial ribosomal protein bS6 family.

Binds together with bS18 to 16S ribosomal RNA. The polypeptide is Small ribosomal subunit protein bS6 (Borrelia hermsii (strain HS1 / DAH)).